The sequence spans 429 residues: Glycine betaine monooxygenase oxygenase subunit (429 aa).

The 108-residue stretch at 56–163 folds into the Rieske domain; that stretch reads WLIAGMTCEI…VKTAGGYIFI (108 aa). [2Fe-2S] cluster contacts are provided by Cys-98, His-100, Cys-118, and His-121. Residues His-217 and His-222 each contribute to the Fe cation site.

Belongs to the bacterial ring-hydroxylating dioxygenase alpha subunit family. As to quaternary structure, the system is composed of an oxygenase subunit (GbcA) and a reductase subunit (GbcB). Requires [2Fe-2S] cluster as cofactor. It depends on Fe cation as a cofactor.

It carries out the reaction glycine betaine + NADH + O2 + H(+) = N,N-dimethylglycine + formaldehyde + NAD(+) + H2O. In terms of biological role, involved in degradation of glycine betaine. Part of a Rieske-type oxygenase system that catalyzes the conversion of glycine betaine (GB) to dimethylglycine (DMG). This subunit is the terminal oxygenase component of the system. This Pseudomonas aeruginosa (strain UCBPP-PA14) protein is Glycine betaine monooxygenase oxygenase subunit.